A 147-amino-acid polypeptide reads, in one-letter code: Ubiquitin-conjugating enzyme E2 2 (147 aa).

A UBC core domain is found at 1–147 (MALKRIQKEL…AREWTQKYAM (147 aa)). Residue C85 is the Glycyl thioester intermediate of the active site.

It belongs to the ubiquitin-conjugating enzyme family. Interacts with the brc-1-brd-1 heterodimer following ionizing irradiation. In terms of tissue distribution, expressed in the nervous system.

The protein localises to the nucleus. It is found in the chromosome. The protein resides in the cytoplasm. The enzyme catalyses S-ubiquitinyl-[E1 ubiquitin-activating enzyme]-L-cysteine + [E2 ubiquitin-conjugating enzyme]-L-cysteine = [E1 ubiquitin-activating enzyme]-L-cysteine + S-ubiquitinyl-[E2 ubiquitin-conjugating enzyme]-L-cysteine.. The protein operates within protein modification; protein ubiquitination. Catalyzes the covalent attachment of ubiquitin to other proteins. Mediates the selective degradation of short-lived and abnormal proteins. Plays a role in the DNA damage response. In particular, in response to ionizing radiation, associates with the E3 ubiquitin-protein ligase brc-1-brd-1 heterodimer on chromatin to activate E3-ubiquitin ligase activity of the heterodimer, and thus its DNA damage repair mechanisms. Required, cell autonomously, for death of the linker cell, a male-specific cell which guides the elongation of the gonad; perhaps acting as part of the ubiquitin proteasome system (UPS) and modulated by heat shock transcription factor hsf-1. In Caenorhabditis elegans, this protein is Ubiquitin-conjugating enzyme E2 2.